A 336-amino-acid polypeptide reads, in one-letter code: Fructose-1,6-bisphosphatase class 1 (336 aa).

Residues glutamate 90, aspartate 112, leucine 114, and aspartate 115 each contribute to the Mg(2+) site. Substrate is bound by residues 115–118 (DGSS), asparagine 211, and lysine 277. A Mg(2+)-binding site is contributed by glutamate 283.

Belongs to the FBPase class 1 family. Homotetramer. Requires Mg(2+) as cofactor.

The protein localises to the cytoplasm. It catalyses the reaction beta-D-fructose 1,6-bisphosphate + H2O = beta-D-fructose 6-phosphate + phosphate. It participates in carbohydrate biosynthesis; gluconeogenesis. In Pseudomonas fluorescens (strain SBW25), this protein is Fructose-1,6-bisphosphatase class 1.